Here is a 401-residue protein sequence, read N- to C-terminus: Imidazolonepropionase (401 aa).

Residues histidine 66 and histidine 68 each coordinate Fe(3+). Zn(2+) contacts are provided by histidine 66 and histidine 68. Residues arginine 75, tyrosine 138, and histidine 171 each coordinate 4-imidazolone-5-propanoate. Residue tyrosine 138 coordinates N-formimidoyl-L-glutamate. Position 236 (histidine 236) interacts with Fe(3+). A Zn(2+)-binding site is contributed by histidine 236. Glutamine 239 is a 4-imidazolone-5-propanoate binding site. Residue aspartate 311 participates in Fe(3+) binding. Position 311 (aspartate 311) interacts with Zn(2+). 2 residues coordinate N-formimidoyl-L-glutamate: asparagine 313 and glycine 315. Threonine 316 contributes to the 4-imidazolone-5-propanoate binding site.

Belongs to the metallo-dependent hydrolases superfamily. HutI family. Zn(2+) serves as cofactor. It depends on Fe(3+) as a cofactor.

Its subcellular location is the cytoplasm. It carries out the reaction 4-imidazolone-5-propanoate + H2O = N-formimidoyl-L-glutamate. It functions in the pathway amino-acid degradation; L-histidine degradation into L-glutamate; N-formimidoyl-L-glutamate from L-histidine: step 3/3. Functionally, catalyzes the hydrolytic cleavage of the carbon-nitrogen bond in imidazolone-5-propanoate to yield N-formimidoyl-L-glutamate. It is the third step in the universal histidine degradation pathway. The protein is Imidazolonepropionase of Pseudomonas putida (Arthrobacter siderocapsulatus).